We begin with the raw amino-acid sequence, 404 residues long: Deoxyguanosinetriphosphate triphosphohydrolase-like protein (404 aa).

A disordered region spans residues 1-32 (MAVGMAAPHATYASDPARSRGRLFDEPPSKTR). Residues 22–32 (RLFDEPPSKTR) show a composition bias toward basic and acidic residues. Residues 69–217 (RLTHTLEVAQ…AAIADDIAYD (149 aa)) form the HD domain.

This sequence belongs to the dGTPase family. Type 2 subfamily.

This is Deoxyguanosinetriphosphate triphosphohydrolase-like protein from Nitrobacter hamburgensis (strain DSM 10229 / NCIMB 13809 / X14).